A 355-amino-acid chain; its full sequence is UDP-N-acetylglucosamine--N-acetylmuramyl-(pentapeptide) pyrophosphoryl-undecaprenol N-acetylglucosamine transferase (355 aa).

Residues 14–16, N126, R162, S190, I243, 262–267, and Q288 contribute to the UDP-N-acetyl-alpha-D-glucosamine site; these read SGG and ALTVSE.

This sequence belongs to the glycosyltransferase 28 family. MurG subfamily.

It is found in the cell inner membrane. It catalyses the reaction di-trans,octa-cis-undecaprenyl diphospho-N-acetyl-alpha-D-muramoyl-L-alanyl-D-glutamyl-meso-2,6-diaminopimeloyl-D-alanyl-D-alanine + UDP-N-acetyl-alpha-D-glucosamine = di-trans,octa-cis-undecaprenyl diphospho-[N-acetyl-alpha-D-glucosaminyl-(1-&gt;4)]-N-acetyl-alpha-D-muramoyl-L-alanyl-D-glutamyl-meso-2,6-diaminopimeloyl-D-alanyl-D-alanine + UDP + H(+). Its pathway is cell wall biogenesis; peptidoglycan biosynthesis. In terms of biological role, cell wall formation. Catalyzes the transfer of a GlcNAc subunit on undecaprenyl-pyrophosphoryl-MurNAc-pentapeptide (lipid intermediate I) to form undecaprenyl-pyrophosphoryl-MurNAc-(pentapeptide)GlcNAc (lipid intermediate II). In Blochmanniella pennsylvanica (strain BPEN), this protein is UDP-N-acetylglucosamine--N-acetylmuramyl-(pentapeptide) pyrophosphoryl-undecaprenol N-acetylglucosamine transferase.